Here is a 275-residue protein sequence, read N- to C-terminus: NADPH-dependent 7-cyano-7-deazaguanine reductase (275 aa).

Substrate is bound at residue 81-83 (IES). 83-84 (SK) is an NADPH binding site. The active-site Thioimide intermediate is the Cys-181. Asp-188 serves as the catalytic Proton donor. 220-221 (HE) is a substrate binding site. 249–250 (RG) contributes to the NADPH binding site.

This sequence belongs to the GTP cyclohydrolase I family. QueF type 2 subfamily. As to quaternary structure, homodimer.

The protein resides in the cytoplasm. The enzyme catalyses 7-aminomethyl-7-carbaguanine + 2 NADP(+) = 7-cyano-7-deazaguanine + 2 NADPH + 3 H(+). It participates in tRNA modification; tRNA-queuosine biosynthesis. In terms of biological role, catalyzes the NADPH-dependent reduction of 7-cyano-7-deazaguanine (preQ0) to 7-aminomethyl-7-deazaguanine (preQ1). This Xylella fastidiosa (strain M23) protein is NADPH-dependent 7-cyano-7-deazaguanine reductase.